Consider the following 105-residue polypeptide: MNKFYNYNSSSHQVLLNLKVKPNSKQNLISDFVIINNIPYLKLSIKATPEQGKANEEIINYLAKEWKLSRKDIEIIKGHTNSLKTILIKNIDEDYLNLIINSYIK.

Belongs to the UPF0235 family.

In Rickettsia felis (strain ATCC VR-1525 / URRWXCal2) (Rickettsia azadi), this protein is UPF0235 protein RF_1332.